A 548-amino-acid chain; its full sequence is Lipase 2 (548 aa).

A signal peptide spans 1–14; the sequence is MKLCLLALGAAVAA. Cysteines 74 and 111 form a disulfide. The active-site Acyl-ester intermediate is the S223. A disulfide bond links C282 and C291. The active-site Charge relay system is E355. N365 carries an N-linked (GlcNAc...) asparagine glycan. Catalysis depends on H463, which acts as the Charge relay system.

The protein belongs to the type-B carboxylesterase/lipase family.

The catalysed reaction is a triacylglycerol + H2O = a diacylglycerol + a fatty acid + H(+). This is Lipase 2 (LIP2) from Diutina rugosa (Yeast).